Consider the following 268-residue polypeptide: Myb-related protein 315 (268 aa).

HTH myb-type domains are found at residues 9–61 (KFGL…MNYL) and 62–116 (RPDL…KKKL). DNA-binding regions (H-T-H motif) lie at residues 37–61 (WRVI…MNYL) and 89–112 (WSKI…NTHI).

In terms of tissue distribution, expressed in roots, stems, leaves, seed pods and flowers. Strongest expression in the stem.

Its subcellular location is the nucleus. Its function is as follows. Transcription factor. The sequence is that of Myb-related protein 315 from Antirrhinum majus (Garden snapdragon).